The chain runs to 307 residues: MLKNKHLLDPSDFTIEEFDEIFKLAHQIMANPKEYQNICNGKILATLFYEPSTRTRLSFESAMLRLGGQVIGFSEPNSSSVSKGESLRDTIKTVNCYADLIAMRHPLEGAAKVASMYSDIPVINAGDGGHQHPTQTLTDLLTIKEYKGNLEGNTIALCGDLKFGRTVHSLIKALSRYKNNKFILISPIELRIPNYIREQILEKNNIEYKEITSLEEGIKEADILYMTRIQRERFVDQSEYERLKDVYVLDEAKMKGAKEDMMVLHPLPRVNEIAYEVDEDSRAFYFKQAKCGMYVRMALMAKLLGEA.

Carbamoyl phosphate contacts are provided by Arg54 and Thr55. Lys83 contributes to the L-aspartate binding site. Carbamoyl phosphate contacts are provided by Arg104, His132, and Gln135. Residues Arg165 and Arg228 each coordinate L-aspartate. Positions 267 and 268 each coordinate carbamoyl phosphate.

It belongs to the aspartate/ornithine carbamoyltransferase superfamily. ATCase family. As to quaternary structure, heterododecamer (2C3:3R2) of six catalytic PyrB chains organized as two trimers (C3), and six regulatory PyrI chains organized as three dimers (R2).

The catalysed reaction is carbamoyl phosphate + L-aspartate = N-carbamoyl-L-aspartate + phosphate + H(+). The protein operates within pyrimidine metabolism; UMP biosynthesis via de novo pathway; (S)-dihydroorotate from bicarbonate: step 2/3. Functionally, catalyzes the condensation of carbamoyl phosphate and aspartate to form carbamoyl aspartate and inorganic phosphate, the committed step in the de novo pyrimidine nucleotide biosynthesis pathway. This Clostridium perfringens (strain ATCC 13124 / DSM 756 / JCM 1290 / NCIMB 6125 / NCTC 8237 / Type A) protein is Aspartate carbamoyltransferase catalytic subunit.